We begin with the raw amino-acid sequence, 142 residues long: Small ribosomal subunit protein uS19 (142 aa).

This sequence belongs to the universal ribosomal protein uS19 family. As to quaternary structure, component of the small ribosomal subunit. Mature ribosomes consist of a small (40S) and a large (60S) subunit. The 40S subunit contains about 32 different proteins and 1 molecule of RNA (18S). The 60S subunit contains 45 different proteins and 3 molecules of RNA (25S, 5.8S and 5S).

The protein localises to the cytoplasm. Component of the ribosome, a large ribonucleoprotein complex responsible for the synthesis of proteins in the cell. The small ribosomal subunit (SSU) binds messenger RNAs (mRNAs) and translates the encoded message by selecting cognate aminoacyl-transfer RNA (tRNA) molecules. The large subunit (LSU) contains the ribosomal catalytic site termed the peptidyl transferase center (PTC), which catalyzes the formation of peptide bonds, thereby polymerizing the amino acids delivered by tRNAs into a polypeptide chain. The nascent polypeptides leave the ribosome through a tunnel in the LSU and interact with protein factors that function in enzymatic processing, targeting, and the membrane insertion of nascent chains at the exit of the ribosomal tunnel. RPS15 has a role in the late stage of the assembly of pre-40S particles within the nucleus and controls their export to the cytoplasm. The protein is Small ribosomal subunit protein uS19 (RPS15) of Candida albicans (strain SC5314 / ATCC MYA-2876) (Yeast).